The chain runs to 150 residues: Flagellar assembly factor FliW (150 aa).

It belongs to the FliW family. In terms of assembly, interacts with translational regulator CsrA and flagellin(s).

Its subcellular location is the cytoplasm. Functionally, acts as an anti-CsrA protein, binds CsrA and prevents it from repressing translation of its target genes, one of which is flagellin. Binds to flagellin and participates in the assembly of the flagellum. In Caldanaerobacter subterraneus subsp. tengcongensis (strain DSM 15242 / JCM 11007 / NBRC 100824 / MB4) (Thermoanaerobacter tengcongensis), this protein is Flagellar assembly factor FliW.